The primary structure comprises 299 residues: tRNA dimethylallyltransferase (299 aa).

An ATP-binding site is contributed by 10-17 (GPTAVGKT). 12-17 (TAVGKT) contributes to the substrate binding site. Positions 35–38 (DSQQ) are interaction with substrate tRNA.

It belongs to the IPP transferase family. Monomer. It depends on Mg(2+) as a cofactor.

It catalyses the reaction adenosine(37) in tRNA + dimethylallyl diphosphate = N(6)-dimethylallyladenosine(37) in tRNA + diphosphate. Functionally, catalyzes the transfer of a dimethylallyl group onto the adenine at position 37 in tRNAs that read codons beginning with uridine, leading to the formation of N6-(dimethylallyl)adenosine (i(6)A). This is tRNA dimethylallyltransferase from Streptococcus thermophilus (strain ATCC BAA-491 / LMD-9).